Consider the following 247-residue polypeptide: Triosephosphate isomerase (247 aa).

The substrate site is built by N10 and K12. H94 (electrophile) is an active-site residue. Catalysis depends on E164, which acts as the Proton acceptor.

The protein belongs to the triosephosphate isomerase family. Homodimer.

The enzyme catalyses D-glyceraldehyde 3-phosphate = dihydroxyacetone phosphate. It participates in carbohydrate biosynthesis; gluconeogenesis. The protein operates within carbohydrate degradation; glycolysis; D-glyceraldehyde 3-phosphate from glycerone phosphate: step 1/1. This chain is Triosephosphate isomerase (Tpi), found in Culex tarsalis (Encephalitis mosquito).